The sequence spans 173 residues: U1 small nuclear ribonucleoprotein C (173 aa).

The Matrin-type zinc-finger motif lies at 4-36; the sequence is YYCDYCDTYLTHDSPSVRKTHCQGRKHKDNVKF. The interval 72 to 100 is disordered; it reads AAIPPPANMQGPPRPVPPGPMGPGPNMLG. Pro residues predominate over residues 73–94; that stretch reads AIPPPANMQGPPRPVPPGPMGP.

This sequence belongs to the U1 small nuclear ribonucleoprotein C family. U1 snRNP is composed of the 7 core Sm proteins B/B', D1, D2, D3, E, F and G that assemble in a heptameric protein ring on the Sm site of the small nuclear RNA to form the core snRNP, and at least 3 U1 snRNP-specific proteins U1-70K, U1-A and U1-C. U1-C interacts with U1 snRNA and the 5' splice-site region of the pre-mRNA.

Its subcellular location is the nucleus. Component of the spliceosomal U1 snRNP, which is essential for recognition of the pre-mRNA 5' splice-site and the subsequent assembly of the spliceosome. U1-C is directly involved in initial 5' splice-site recognition for both constitutive and regulated alternative splicing. The interaction with the 5' splice-site seems to precede base-pairing between the pre-mRNA and the U1 snRNA. Stimulates commitment or early (E) complex formation by stabilizing the base pairing of the 5' end of the U1 snRNA and the 5' splice-site region. This is U1 small nuclear ribonucleoprotein C from Pediculus humanus subsp. corporis (Body louse).